The chain runs to 145 residues: Anaerobic nitrite reductase NSHB5 (145 aa).

In terms of domain architecture, Globin spans Gly-2 to Lys-142. The short motif at Glu-35–Ala-39 is the Homodimerization element. Residues Ser-45, His-59, Lys-61, Arg-84, Thr-88, and His-89 each contribute to the heme b site. The Homodimerization motif lies at Asp-96–Asp-108.

It belongs to the plant globin family. In terms of assembly, homodimer. It depends on heme b as a cofactor. As to expression, expressed in embryonic (embryos, coleoptiles and seminal roots) and vegetative (leaves and roots) organs.

The protein localises to the cytoplasm. The protein resides in the nucleus. It catalyses the reaction Fe(III)-heme b-[protein] + nitric oxide + H2O = Fe(II)-heme b-[protein] + nitrite + 2 H(+). Phytoglobin that reduces nitrite to nitric oxide under anoxic conditions (e.g. during flooding or in waterlogged soil). May not function as an oxygen storage or transport protein. Has an unusually high affinity for O(2) through an hexacoordinate heme iron because of a very low dissociation constant. In Oryza sativa subsp. indica (Rice), this protein is Anaerobic nitrite reductase NSHB5.